A 491-amino-acid chain; its full sequence is Cytochrome P450 2B3 (491 aa).

Cysteine 436 provides a ligand contact to heme.

Belongs to the cytochrome P450 family. The cofactor is heme. In terms of tissue distribution, liver. Not found in the lung, kidney and prostate.

It is found in the endoplasmic reticulum membrane. The protein localises to the microsome membrane. It catalyses the reaction an organic molecule + reduced [NADPH--hemoprotein reductase] + O2 = an alcohol + oxidized [NADPH--hemoprotein reductase] + H2O + H(+). In terms of biological role, cytochromes P450 are a group of heme-thiolate monooxygenases. In liver microsomes, this enzyme is involved in an NADPH-dependent electron transport pathway. It oxidizes a variety of structurally unrelated compounds, including steroids, fatty acids, and xenobiotics. The chain is Cytochrome P450 2B3 (Cyp2b3) from Rattus norvegicus (Rat).